Consider the following 347-residue polypeptide: Uroporphyrinogen decarboxylase (347 aa).

Substrate-binding positions include Arg24–Arg28, Asp74, Tyr145, Ser200, and His315.

It belongs to the uroporphyrinogen decarboxylase family. As to quaternary structure, homodimer.

It is found in the cytoplasm. The catalysed reaction is uroporphyrinogen III + 4 H(+) = coproporphyrinogen III + 4 CO2. It participates in porphyrin-containing compound metabolism; protoporphyrin-IX biosynthesis; coproporphyrinogen-III from 5-aminolevulinate: step 4/4. Functionally, catalyzes the decarboxylation of four acetate groups of uroporphyrinogen-III to yield coproporphyrinogen-III. The protein is Uroporphyrinogen decarboxylase of Hydrogenobaculum sp. (strain Y04AAS1).